A 168-amino-acid polypeptide reads, in one-letter code: 3-hydroxyacyl-[acyl-carrier-protein] dehydratase FabZ (168 aa).

Residue H54 is part of the active site.

The protein belongs to the thioester dehydratase family. FabZ subfamily.

It is found in the cytoplasm. It catalyses the reaction a (3R)-hydroxyacyl-[ACP] = a (2E)-enoyl-[ACP] + H2O. In terms of biological role, involved in unsaturated fatty acids biosynthesis. Catalyzes the dehydration of short chain beta-hydroxyacyl-ACPs and long chain saturated and unsaturated beta-hydroxyacyl-ACPs. This is 3-hydroxyacyl-[acyl-carrier-protein] dehydratase FabZ from Yersinia enterocolitica serotype O:8 / biotype 1B (strain NCTC 13174 / 8081).